The sequence spans 129 residues: Small ribosomal subunit protein uS11 (129 aa).

The protein belongs to the universal ribosomal protein uS11 family. Part of the 30S ribosomal subunit. Interacts with proteins S7 and S18. Binds to IF-3.

Located on the platform of the 30S subunit, it bridges several disparate RNA helices of the 16S rRNA. Forms part of the Shine-Dalgarno cleft in the 70S ribosome. This is Small ribosomal subunit protein uS11 from Colwellia psychrerythraea (strain 34H / ATCC BAA-681) (Vibrio psychroerythus).